A 78-amino-acid polypeptide reads, in one-letter code: Translation initiation factor IF-1, chloroplastic (78 aa).

The S1-like domain occupies 1-72; the sequence is MEKQKLIDME…TKGRITYRLR (72 aa).

This sequence belongs to the IF-1 family. Component of the 30S ribosomal translation pre-initiation complex which assembles on the 30S ribosome in the order IF-2 and IF-3, IF-1 and N-formylmethionyl-tRNA(fMet); mRNA recruitment can occur at any time during PIC assembly.

It is found in the plastid. The protein localises to the chloroplast. Functionally, one of the essential components for the initiation of protein synthesis. Stabilizes the binding of IF-2 and IF-3 on the 30S subunit to which N-formylmethionyl-tRNA(fMet) subsequently binds. Helps modulate mRNA selection, yielding the 30S pre-initiation complex (PIC). Upon addition of the 50S ribosomal subunit IF-1, IF-2 and IF-3 are released leaving the mature 70S translation initiation complex. This Marchantia polymorpha (Common liverwort) protein is Translation initiation factor IF-1, chloroplastic.